Reading from the N-terminus, the 306-residue chain is MPDYDLIAILGPTASGKTPFAAALAAELNTEIISADSRQIYRGMDLGTGKDLEDYTINGRQIPYHLIDIADPGYKYNVFEYQRDFLTAYETIKQKGCLPVLCGGTGLYLESVLKGYRLIPVPENQELRVRLAEKSLEELTAILSSYKTLHNSTDVDTVKRAIRAIEIEEYYAKTPIEEREFPQLNSLIIGVDIDRELRREKITRRLKQRLDDGMVEEVRRLLAEGIQPDDLIYYGLEYKYLTLYAIGKMTYDEMFTGLETAIHQFAKRQMTWFRGMERRGFTIHWVDASLPMEEKINFVKQKLKEF.

11–18 (GPTASGKT) serves as a coordination point for ATP. 13-18 (TASGKT) contributes to the substrate binding site. Residues 36–39 (DSRQ) are interaction with substrate tRNA.

Belongs to the IPP transferase family. In terms of assembly, monomer. It depends on Mg(2+) as a cofactor.

It catalyses the reaction adenosine(37) in tRNA + dimethylallyl diphosphate = N(6)-dimethylallyladenosine(37) in tRNA + diphosphate. In terms of biological role, catalyzes the transfer of a dimethylallyl group onto the adenine at position 37 in tRNAs that read codons beginning with uridine, leading to the formation of N6-(dimethylallyl)adenosine (i(6)A). This Bacteroides fragilis (strain ATCC 25285 / DSM 2151 / CCUG 4856 / JCM 11019 / LMG 10263 / NCTC 9343 / Onslow / VPI 2553 / EN-2) protein is tRNA dimethylallyltransferase 2.